Consider the following 425-residue polypeptide: MPSISHPPSALRDFLRSEAAGGVILMAVAVLAMIVANSPLADSYFHLLHVQTGPVLSEKLGPMTPHLWINDALMAVFFLLVGLEIKREFVDGRLVTWQQRRLPFIAALGGMAAPALVFLAVTAQSSGLTQGWAIPAATDIAFAIGVMALLGSRVPTALKLFLTTVAIVDDMGAVVIIALAYTASIKGIALLAAAVILGAMMAMNRAGVRHLAPYLLGFVLLWFAVLVSGVHATIAGVLAAFTVPVVATPGAPDSPDSPLHRLEHALHPWSAFLIVPLFGFANAGISLEGFSLGSLLEPLPLGIAAGLFIGKQLGIFSLIWAAVKLGIAQRPRGSTWLQVYGLSVLCGIGFTMSLFIGMLAFASSPDLIEEAKLGVITGSLLSGVLGYLVLRFAPPAADAAQAETEIDREIEQDGDVEAIEGKLRQ.

Transmembrane regions (helical) follow at residues 20-40, 65-85, 102-122, 131-151, 160-180, 183-203, 218-238, 272-292, 303-323, 342-362, and 373-393; these read AGGVILMAVAVLAMIVANSPL, PHLWINDALMAVFFLLVGLEI, LPFIAALGGMAAPALVFLAVT, GWAIPAATDIAFAIGVMALLG, LFLTTVAIVDDMGAVVIIALA, ASIKGIALLAAAVILGAMMAM, FVLLWFAVLVSGVHATIAGVL, FLIVPLFGFANAGISLEGFSL, IAAGLFIGKQLGIFSLIWAAV, LSVLCGIGFTMSLFIGMLAFA, and LGVITGSLLSGVLGYLVLRFA.

The protein belongs to the NhaA Na(+)/H(+) (TC 2.A.33) antiporter family.

It localises to the cell inner membrane. It carries out the reaction Na(+)(in) + 2 H(+)(out) = Na(+)(out) + 2 H(+)(in). Functionally, na(+)/H(+) antiporter that extrudes sodium in exchange for external protons. The polypeptide is Na(+)/H(+) antiporter NhaA 1 (Novosphingobium aromaticivorans (strain ATCC 700278 / DSM 12444 / CCUG 56034 / CIP 105152 / NBRC 16084 / F199)).